Reading from the N-terminus, the 589-residue chain is Peptide transporter PTR_A (589 aa).

Residues 1-56 (MSETKPAANDLSNVPSASDSDKDNSLDKVHSLEKTGVHEDINKLPSSDLEQLEDDG) are disordered. Residues 19-42 (DSDKDNSLDKVHSLEKTGVHEDIN) are compositionally biased toward basic and acidic residues. The next 4 membrane-spanning stretches (helical) occupy residues 74–95 (IPLS…YYGL), 124–144 (ALSY…AWIA), 153–173 (AICI…ITSI), and 180–200 (NTSL…TGGV). The N-linked (GlcNAc...) asparagine glycan is linked to N233. A run of 8 helical transmembrane segments spans residues 236–256 (IQNV…SVIA), 266–286 (FWAG…VLLL), 345–365 (VYAC…GQMI), 388–408 (INAI…YPFI), 420–440 (IFWG…LQHF), 467–487 (IAIQ…ASIT), 502–522 (SFIM…GIAL), and 533–553 (WTYT…YIIF).

This sequence belongs to the major facilitator superfamily. Proton-dependent oligopeptide transporter (POT/PTR) (TC 2.A.17) family.

It is found in the cell membrane. The catalysed reaction is a dipeptide(out) + H(+)(out) = a dipeptide(in) + H(+)(in). The enzyme catalyses an L-amino acid tripeptide(out) + H(+)(out) = an L-amino acid tripeptide(in) + H(+)(in). Peptide transporter that exploits the inwardly directed proton motive force to facilitate the cellular uptake of di/tripeptides. The protein is Peptide transporter PTR_A of Candidozyma auris (Yeast).